Reading from the N-terminus, the 134-residue chain is UPF0412 protein YaaI (134 aa).

Residues M1–A23 form the signal peptide.

Belongs to the UPF0412 family.

The chain is UPF0412 protein YaaI from Escherichia coli O127:H6 (strain E2348/69 / EPEC).